Here is a 152-residue protein sequence, read N- to C-terminus: Small ribosomal subunit protein uS9 (152 aa).

This sequence belongs to the universal ribosomal protein uS9 family.

This chain is Small ribosomal subunit protein uS9, found in Mycobacterium ulcerans (strain Agy99).